Consider the following 275-residue polypeptide: Dermonecrotic toxin SpeSicTox-betaIIA1 (275 aa).

H5 is an active-site residue. Mg(2+) is bound by residues E25 and D27. The Nucleophile role is filled by H41. Intrachain disulfides connect C45–C51 and C47–C190. D85 is a binding site for Mg(2+).

The protein belongs to the arthropod phospholipase D family. Class II subfamily. The cofactor is Mg(2+). In terms of tissue distribution, expressed by the venom gland.

It is found in the secreted. It carries out the reaction an N-(acyl)-sphingosylphosphocholine = an N-(acyl)-sphingosyl-1,3-cyclic phosphate + choline. It catalyses the reaction an N-(acyl)-sphingosylphosphoethanolamine = an N-(acyl)-sphingosyl-1,3-cyclic phosphate + ethanolamine. The enzyme catalyses a 1-acyl-sn-glycero-3-phosphocholine = a 1-acyl-sn-glycero-2,3-cyclic phosphate + choline. The catalysed reaction is a 1-acyl-sn-glycero-3-phosphoethanolamine = a 1-acyl-sn-glycero-2,3-cyclic phosphate + ethanolamine. Functionally, dermonecrotic toxins cleave the phosphodiester linkage between the phosphate and headgroup of certain phospholipids (sphingolipid and lysolipid substrates), forming an alcohol (often choline) and a cyclic phosphate. This toxin acts on sphingomyelin (SM). It may also act on ceramide phosphoethanolamine (CPE), lysophosphatidylcholine (LPC) and lysophosphatidylethanolamine (LPE), but not on lysophosphatidylserine (LPS), and lysophosphatidylglycerol (LPG). It acts by transphosphatidylation, releasing exclusively cyclic phosphate products as second products. Induces dermonecrosis, hemolysis, increased vascular permeability, edema, inflammatory response, and platelet aggregation. This is Dermonecrotic toxin SpeSicTox-betaIIA1 from Sicarius peruensis (Six-eyed sand spider).